The sequence spans 82 residues: Small ribosomal subunit protein bS18 (82 aa).

Residues 1 to 20 are disordered; the sequence is MVDINQIPTRRPFHRRRKTC.

It belongs to the bacterial ribosomal protein bS18 family. Part of the 30S ribosomal subunit. Forms a tight heterodimer with protein bS6.

In terms of biological role, binds as a heterodimer with protein bS6 to the central domain of the 16S rRNA, where it helps stabilize the platform of the 30S subunit. The protein is Small ribosomal subunit protein bS18 of Brucella abortus (strain 2308).